Here is a 694-residue protein sequence, read N- to C-terminus: Junctophilin-2 (694 aa).

At Met-1–Thr-672 the chain is on the cytoplasmic side. 6 MORN repeats span residues Tyr-14 to Gly-36, Tyr-38 to Thr-59, Phe-60 to Arg-79, Tyr-82 to Ala-104, Tyr-106 to Thr-128, and Tyr-129 to Met-151. A phosphoserine mark is found at Ser-162 and Ser-165. Disordered regions lie at residues Ser-164 to Ser-192 and Arg-231 to Phe-278. Low complexity predominate over residues Ala-176–Ala-189. Residues Arg-235–Arg-244 are compositionally biased toward polar residues. The span at Ser-250–Glu-267 shows a compositional bias: low complexity. MORN repeat units follow at residues Tyr-290–Arg-312 and Tyr-313–Arg-335. The short motif at Lys-350 to Lys-364 is the Bipartite nuclear localization signal element. A phosphoserine mark is found at Ser-445, Ser-447, and Ser-466. The segment at Leu-448–Glu-663 is disordered. The span at Pro-467–Arg-476 shows a compositional bias: basic and acidic residues. Phosphothreonine is present on Thr-474. Residues Glu-478 to Pro-491 show a composition bias toward pro residues. Position 483 is a phosphoserine (Ser-483). Thr-487 is modified (phosphothreonine). The short motif at Lys-492 to Pro-496 is the Nuclear localization signal element. Residues Ser-522–Pro-540 are compositionally biased toward low complexity. Phosphoserine occurs at positions 536, 542, 596, and 600. The segment covering Pro-589–Ala-610 has biased composition (low complexity). A helical; Anchor for type IV membrane protein membrane pass occupies residues Val-673–Leu-693.

It belongs to the junctophilin family. As to quaternary structure, interacts with TRPC3. Interacts with BAG5 and HSPA8; the interaction with HSPA8 is increased in the presence of BAG5. Junctophilin-2 N-terminal fragment: Interacts with MEF2C. In terms of processing, proteolytically cleaved by calpain in response to cardiac stress. The major cleavage site takes place at the C-terminus and leads to the release of the Junctophilin-2 N-terminal fragment chain (JP2NT). Post-translationally, phosphorylation on Ser-165, probably by PKC, affects RYR1-mediated calcium ion release, interaction with TRPC3, and skeletal muscle myotubule development.

The protein resides in the cell membrane. Its subcellular location is the sarcoplasmic reticulum membrane. The protein localises to the endoplasmic reticulum membrane. It is found in the nucleus. Membrane-binding protein that provides a structural bridge between the plasma membrane and the sarcoplasmic reticulum and is required for normal excitation-contraction coupling in cardiomyocytes. Provides a structural foundation for functional cross-talk between the cell surface and intracellular Ca(2+) release channels by maintaining the 12-15 nm gap between the sarcolemma and the sarcoplasmic reticulum membranes in the cardiac dyads. Necessary for proper intracellular Ca(2+) signaling in cardiac myocytes via its involvement in ryanodine receptor-mediated calcium ion release. Contributes to the construction of skeletal muscle triad junctions. Its function is as follows. Transcription repressor required to safeguard against the deleterious effects of cardiac stress. Generated following cleavage of the Junctophilin-2 chain by calpain in response to cardiac stress in cardiomyocytes. Following cleavage and release from the membrane, translocates to the nucleus, binds DNA and represses expression of genes implicated in cell growth and differentiation, hypertrophy, inflammation and fibrosis. Modifies the transcription profile and thereby attenuates pathological remodeling in response to cardiac stress. Probably acts by competing with MEF2 transcription factors and TATA-binding proteins. This is Junctophilin-2 (JPH2) from Oryctolagus cuniculus (Rabbit).